Here is a 303-residue protein sequence, read N- to C-terminus: N-acetyl-D-glucosamine kinase (303 aa).

ATP is bound by residues 4-11 and 133-140; these read GFDIGGTK and GVGGGLIF. Zn(2+) is bound by residues H157, C177, C179, and C184.

The protein belongs to the ROK (NagC/XylR) family. NagK subfamily.

The catalysed reaction is N-acetyl-D-glucosamine + ATP = N-acetyl-D-glucosamine 6-phosphate + ADP + H(+). The protein operates within cell wall biogenesis; peptidoglycan recycling. Catalyzes the phosphorylation of N-acetyl-D-glucosamine (GlcNAc) derived from cell-wall degradation, yielding GlcNAc-6-P. The polypeptide is N-acetyl-D-glucosamine kinase (Escherichia coli O6:H1 (strain CFT073 / ATCC 700928 / UPEC)).